The following is a 260-amino-acid chain: 5'-nucleotidase SurE (260 aa).

The a divalent metal cation site is built by Asp-13, Asp-14, Ser-44, and Asn-102.

Belongs to the SurE nucleotidase family. Requires a divalent metal cation as cofactor.

Its subcellular location is the cytoplasm. The catalysed reaction is a ribonucleoside 5'-phosphate + H2O = a ribonucleoside + phosphate. Functionally, nucleotidase that shows phosphatase activity on nucleoside 5'-monophosphates. The polypeptide is 5'-nucleotidase SurE (Christiangramia forsetii (strain DSM 17595 / CGMCC 1.15422 / KT0803) (Gramella forsetii)).